The following is a 138-amino-acid chain: uncharacterized protein (138 aa).

The next 3 membrane-spanning stretches (helical) occupy residues 8-28, 47-67, and 82-102; these read LIIQISIGLSASLILLFAFLP, FIICFIARLCFSLSAILTIIV, and TLPVLICHGINMLLNLIIAFI.

This sequence to U.parvum UU007, UU008 and UU041.

It localises to the cell membrane. This is an uncharacterized protein from Ureaplasma parvum serovar 3 (strain ATCC 700970).